The sequence spans 664 residues: Alpha-1,4-glucan:maltose-1-phosphate maltosyltransferase (664 aa).

The alpha-maltose 1-phosphate site is built by Lys-261, Gln-321, and Asp-356. The active-site Nucleophile is the Asp-393. Position 394 (Asn-394) interacts with alpha-maltose 1-phosphate. Glu-422 acts as the Proton donor in catalysis. 533–534 is a binding site for alpha-maltose 1-phosphate; sequence KY.

Belongs to the glycosyl hydrolase 13 family. GlgE subfamily. As to quaternary structure, homodimer.

The enzyme catalyses alpha-maltose 1-phosphate + [(1-&gt;4)-alpha-D-glucosyl](n) = [(1-&gt;4)-alpha-D-glucosyl](n+2) + phosphate. Functionally, maltosyltransferase that uses maltose 1-phosphate (M1P) as the sugar donor to elongate linear or branched alpha-(1-&gt;4)-glucans. Is involved in a branched alpha-glucan biosynthetic pathway from trehalose, together with TreS, Mak and GlgB. This is Alpha-1,4-glucan:maltose-1-phosphate maltosyltransferase from Pseudomonas aeruginosa (strain ATCC 15692 / DSM 22644 / CIP 104116 / JCM 14847 / LMG 12228 / 1C / PRS 101 / PAO1).